The primary structure comprises 156 residues: Small ribosomal subunit protein uS7 (156 aa).

Belongs to the universal ribosomal protein uS7 family. In terms of assembly, part of the 30S ribosomal subunit. Contacts proteins S9 and S11.

Its function is as follows. One of the primary rRNA binding proteins, it binds directly to 16S rRNA where it nucleates assembly of the head domain of the 30S subunit. Is located at the subunit interface close to the decoding center, probably blocks exit of the E-site tRNA. This is Small ribosomal subunit protein uS7 from Metamycoplasma arthritidis (strain 158L3-1) (Mycoplasma arthritidis).